A 612-amino-acid polypeptide reads, in one-letter code: Dihydroxy-acid dehydratase (612 aa).

Aspartate 81 serves as a coordination point for Mg(2+). Residue cysteine 122 coordinates [2Fe-2S] cluster. Residues aspartate 123 and lysine 124 each coordinate Mg(2+). At lysine 124 the chain carries N6-carboxylysine. A [2Fe-2S] cluster-binding site is contributed by cysteine 193. Glutamate 489 provides a ligand contact to Mg(2+). Serine 515 functions as the Proton acceptor in the catalytic mechanism.

The protein belongs to the IlvD/Edd family. In terms of assembly, homodimer. It depends on [2Fe-2S] cluster as a cofactor. Requires Mg(2+) as cofactor.

It carries out the reaction (2R)-2,3-dihydroxy-3-methylbutanoate = 3-methyl-2-oxobutanoate + H2O. The enzyme catalyses (2R,3R)-2,3-dihydroxy-3-methylpentanoate = (S)-3-methyl-2-oxopentanoate + H2O. It participates in amino-acid biosynthesis; L-isoleucine biosynthesis; L-isoleucine from 2-oxobutanoate: step 3/4. Its pathway is amino-acid biosynthesis; L-valine biosynthesis; L-valine from pyruvate: step 3/4. Functionally, functions in the biosynthesis of branched-chain amino acids. Catalyzes the dehydration of (2R,3R)-2,3-dihydroxy-3-methylpentanoate (2,3-dihydroxy-3-methylvalerate) into 2-oxo-3-methylpentanoate (2-oxo-3-methylvalerate) and of (2R)-2,3-dihydroxy-3-methylbutanoate (2,3-dihydroxyisovalerate) into 2-oxo-3-methylbutanoate (2-oxoisovalerate), the penultimate precursor to L-isoleucine and L-valine, respectively. This Xanthomonas campestris pv. campestris (strain B100) protein is Dihydroxy-acid dehydratase.